We begin with the raw amino-acid sequence, 633 residues long: Chitin synthase regulatory factor 4 (633 aa).

The disordered stretch occupies residues 121–151 (ATSSQETKRDRPLPNIRNSAPSATRSHSTPC). Positions 136–149 (IRNSAPSATRSHST) are enriched in polar residues. Ser-148 carries the phosphoserine modification. 5 Sel1-like repeats span residues 278-314 (AKAMYFDAYVYETGAFDVESDIQRAWDLYSSSANLGY), 315-346 (TRSLYRLGVLLEDQGNLEEAVEYFEKGVSEND), 438-474 (SSAQLRMGAVYEFGKYGCPVVPRYSLFYYSAAAKRGE), 475-511 (TEADLAVAKWYLNGSDGIPVDEDLAFMHAERASMAGN), and 512-543 (ANAQFLMGYLFDTRGNTEQATYWYNEAAKAGH). The disordered stretch occupies residues 583–613 (ASETSPPHAPAVSSTPVTSAPPVSQTKVTKV). Residues 592–613 (PAVSSTPVTSAPPVSQTKVTKV) show a composition bias toward low complexity.

It is found in the cytoplasm. In terms of biological role, involved in septum formation. Required for the proper localization of chs2 at the septum. The protein is Chitin synthase regulatory factor 4 (chr4) of Schizosaccharomyces pombe (strain 972 / ATCC 24843) (Fission yeast).